The chain runs to 131 residues: Fumarate reductase subunit C (131 aa).

3 consecutive transmembrane segments (helical) span residues E30–L50, W57–L77, and I109–L129.

The protein belongs to the FrdC family. In terms of assembly, part of an enzyme complex containing four subunits: a flavoprotein (FrdA), an iron-sulfur protein (FrdB), and two hydrophobic anchor proteins (FrdC and FrdD).

Its subcellular location is the cell inner membrane. Functionally, two distinct, membrane-bound, FAD-containing enzymes are responsible for the catalysis of fumarate and succinate interconversion; fumarate reductase is used in anaerobic growth, and succinate dehydrogenase is used in aerobic growth. Anchors the catalytic components of the fumarate reductase complex to the cell inner membrane, binds quinones. The polypeptide is Fumarate reductase subunit C (Shigella flexneri).